We begin with the raw amino-acid sequence, 1214 residues long: Lysine-specific demethylase 3A (1214 aa).

Residues S150 and S209 each carry the phosphoserine modification. The segment covering 194–211 has biased composition (polar residues); that stretch reads TPSSNRQQNTPQAANSPP. Disordered stretches follow at residues 194-215, 271-293, and 310-398; these read TPSS…NIGA, PKGS…STPQ, and KAEL…KSVL. S330 carries the phosphoserine modification. Residues 361-370 show a composition bias toward polar residues; that stretch reads LGSQSQNLKE. Residues 371–380 show a composition bias toward basic and acidic residues; that stretch reads TSVKVDHDSC. Residues 381-391 are compositionally biased toward polar residues; the sequence is CTRSSNKTQTP. The C6-type zinc-finger motif lies at 546-571; that stretch reads CDVCDTTIFNLHWVCPRCGFGVCVDC. The LXXLL motif motif lies at 769–773; it reads LRNLL. K779 is modified (N6-acetyllysine). A JmjC domain is found at 944 to 1167; it reads MPSRFDDLMA…HCFWLTQEFR (224 aa). Residues H1006, D1008, and H1135 each coordinate Fe cation.

The protein belongs to the JHDM2 histone demethylase family. Interacts with VRK1. Fe(2+) is required as a cofactor. In terms of tissue distribution, testis specific. Expressed only in male germ cells.

The protein resides in the cytoplasm. The protein localises to the nucleus. It carries out the reaction N(6),N(6)-dimethyl-L-lysyl(9)-[histone H3] + 2 2-oxoglutarate + 2 O2 = L-lysyl(9)-[histone H3] + 2 formaldehyde + 2 succinate + 2 CO2. Its function is as follows. Histone demethylase that specifically demethylates 'Lys-9' of histone H3, thereby playing a central role in histone code. Preferentially demethylates mono- and dimethylated H3 'Lys-9' residue, with a preference for dimethylated residue, while it has weak or no activity on trimethylated H3 'Lys-9'. Demethylation of Lys residue generates formaldehyde and succinate. Involved in hormone-dependent transcriptional activation, by participating in recruitment to androgen-receptor target genes, resulting in H3 'Lys-9' demethylation and transcriptional activation. Involved in spermatogenesis by regulating expression of target genes such as PRM1 and TNP1 which are required for packaging and condensation of sperm chromatin. Directly regulates expression of PPARA and UCP1 and is involved in obesity resistance. The sequence is that of Lysine-specific demethylase 3A (Kdm3a) from Rattus norvegicus (Rat).